The chain runs to 677 residues: Methionine--tRNA ligase (677 aa).

The 'HIGH' region signature appears at 15-25 (PYANGSIHLGH). Zn(2+)-binding residues include C146, C149, C159, and C162. The 'KMSKS' region signature appears at 333–337 (KMSKS). K336 is an ATP binding site. The tRNA-binding domain occupies 575 to 677 (DFAKVDLRVA…DGAKPGQQVK (103 aa)).

Belongs to the class-I aminoacyl-tRNA synthetase family. MetG type 1 subfamily. As to quaternary structure, homodimer. It depends on Zn(2+) as a cofactor.

The protein resides in the cytoplasm. The enzyme catalyses tRNA(Met) + L-methionine + ATP = L-methionyl-tRNA(Met) + AMP + diphosphate. Functionally, is required not only for elongation of protein synthesis but also for the initiation of all mRNA translation through initiator tRNA(fMet) aminoacylation. This chain is Methionine--tRNA ligase, found in Salmonella schwarzengrund (strain CVM19633).